A 682-amino-acid chain; its full sequence is Nephrocystin-1-like protein (682 aa).

The stretch at Leu-10–Ser-100 forms a coiled coil. Residues Lys-96–Arg-188 form a disordered region. A compositionally biased stretch (acidic residues) spans Asn-128–Leu-148. One can recognise an SH3 domain in the interval Val-215 to Glu-275.

Belongs to the nephrocystin-1 family. Expressed in ciliated sensory neurons of the head (amphid neurons) and the tail in hermaphrodites (phasmid neurons) and males (sensory ray neurons).

Its function is as follows. Plays a role in the extension of dendrites from phasmid ciliated sensory neurons. May be necessary for initial assembly of the cilium. The polypeptide is Nephrocystin-1-like protein (Caenorhabditis elegans).